Reading from the N-terminus, the 377-residue chain is DNA methyltransferase CcrM (377 aa).

The region spanning 271 to 373 (LGKAELTVMT…LRKIIREQMA (103 aa)) is the RAMA domain.

This sequence belongs to the N(4)/N(6)-methyltransferase family.

The catalysed reaction is a 2'-deoxyadenosine in DNA + S-adenosyl-L-methionine = an N(6)-methyl-2'-deoxyadenosine in DNA + S-adenosyl-L-homocysteine + H(+). In terms of biological role, a beta subtype methylase that recognizes the double-stranded sequence 5'-GANTC-3' and methylates on A-2 on both strands. Overexpression from a moderate-copy number plasmid (10-12 copies/cell) leads to enlarged, branched cells, many with 3-5 genome equivalents. Contributes to the accurate cell-cycle control of DNA replication and cellular morphology. In Brucella abortus (strain 2308), this protein is DNA methyltransferase CcrM.